Reading from the N-terminus, the 588-residue chain is NADP-dependent malic enzyme 2 (588 aa).

Positions 1–21 (MGSTPTDLPGEDVADNRSGVG) are disordered. N-acetylglycine is present on Gly2. The active-site Proton donor is the Tyr136. Arg189 lines the NADP(+) pocket. The active-site Proton acceptor is Lys207. A divalent metal cation contacts are provided by Glu279, Asp280, and Asp303. Residues Asp303, 332 to 348 (LFLG…ELIA), and Asn444 each bind NADP(+).

This sequence belongs to the malic enzymes family. As to quaternary structure, homohexamers and homooctamers. Mg(2+) is required as a cofactor. Mn(2+) serves as cofactor. As to expression, expressed in leaves, stems, flowers and roots. Particularly present in vasculatures, trichome basal cells and hydatodes.

Its subcellular location is the cytoplasm. The enzyme catalyses (S)-malate + NADP(+) = pyruvate + CO2 + NADPH. It carries out the reaction oxaloacetate + H(+) = pyruvate + CO2. With respect to regulation, activated by coenzyme A (CoA), aspartate, succinate and fumarate. Repressed by oxaloacetate, glucose and ATP. The protein is NADP-dependent malic enzyme 2 (NADP-ME2) of Arabidopsis thaliana (Mouse-ear cress).